The chain runs to 369 residues: Anhydro-N-acetylmuramic acid kinase (369 aa).

Residue Gly12 to Asp19 participates in ATP binding.

It belongs to the anhydro-N-acetylmuramic acid kinase family.

It carries out the reaction 1,6-anhydro-N-acetyl-beta-muramate + ATP + H2O = N-acetyl-D-muramate 6-phosphate + ADP + H(+). Its pathway is amino-sugar metabolism; 1,6-anhydro-N-acetylmuramate degradation. It functions in the pathway cell wall biogenesis; peptidoglycan recycling. Functionally, catalyzes the specific phosphorylation of 1,6-anhydro-N-acetylmuramic acid (anhMurNAc) with the simultaneous cleavage of the 1,6-anhydro ring, generating MurNAc-6-P. Is required for the utilization of anhMurNAc either imported from the medium or derived from its own cell wall murein, and thus plays a role in cell wall recycling. This Shewanella sp. (strain MR-7) protein is Anhydro-N-acetylmuramic acid kinase.